We begin with the raw amino-acid sequence, 642 residues long: Triacylglycerol lipase 3 (642 aa).

The PNPLA domain occupies 204–392 (LILQGGSLFG…NEIEPFLNIN (189 aa)). Positions 235–239 (GSSMG) match the GXSXG motif. The Nucleophile role is filled by S237. The HXXXXD acyltransferase motif motif lies at 298-303 (HGYSQD). Residue E403 is the Proton acceptor of the active site. The segment covering 471–481 (RKTQRSSSQSP) has biased composition (polar residues). Positions 471–502 (RKTQRSSSQSPIKAGTVEDLEPEPLMSPVPPS) are disordered.

It is found in the lipid droplet. It carries out the reaction a triacylglycerol + H2O = a diacylglycerol + a fatty acid + H(+). The catalysed reaction is 1,2,3-tri-(9Z-octadecenoyl)-glycerol + H2O = di-(9Z)-octadecenoylglycerol + (9Z)-octadecenoate + H(+). It catalyses the reaction di-(9Z)-octadecenoylglycerol + H2O = (9Z-octadecenoyl)-glycerol + (9Z)-octadecenoate + H(+). The enzyme catalyses a 1-acyl-sn-glycero-3-phosphoethanolamine + (9Z)-octadecenoyl-CoA = 1-acyl-2-(9Z)-octadecenoyl-sn-glycero-3-phosphoethanolamine + CoA. It carries out the reaction a 1-acyl-sn-glycero-3-phosphoethanolamine + hexadecanoyl-CoA = 1-acyl-2-hexadecanoyl-sn-glycero-3-phosphoethanolamine + CoA. With respect to regulation, loses its lipolytic activity in cells lacking nonpolar lipids. In terms of biological role, lipid particle-localized triacylglycerol (TAG) lipase. The lipid droplet/particle is a lipid storage compartment which serves as a depot of energy and building blocks for membrane lipid biosynthesis. Involved in the mobilization of the non-polar storage lipids triacylglycerols (TAGs) from lipid particles by hydrolysis of TAGs, releasing and supplying specific fatty acids to the appropriate metabolic pathways. Also catalyzes the acylation of lysophosphatidic acid (LPA). Important for efficient sporulation, but rather through its acyltransferase than lipase activity. The sequence is that of Triacylglycerol lipase 3 (TGL3) from Saccharomyces cerevisiae (strain ATCC 204508 / S288c) (Baker's yeast).